We begin with the raw amino-acid sequence, 458 residues long: Argininosuccinate lyase (458 aa).

This sequence belongs to the lyase 1 family. Argininosuccinate lyase subfamily.

The protein localises to the cytoplasm. The catalysed reaction is 2-(N(omega)-L-arginino)succinate = fumarate + L-arginine. It functions in the pathway amino-acid biosynthesis; L-arginine biosynthesis; L-arginine from L-ornithine and carbamoyl phosphate: step 3/3. In Neisseria meningitidis serogroup A / serotype 4A (strain DSM 15465 / Z2491), this protein is Argininosuccinate lyase.